The primary structure comprises 979 residues: MAEAFIQVVLDNLTSFLKGELVLLFGFQDEFQRLSSMFSTIQAVLEDAQEKQLNDKPLENWLQKLNAATYEVDDILDEYKTKATRFLQSEYGRYHPKVIPFRHKVGKRMDQVMKKLNAIAEERKKFHLQEKIIERQAATRETGSVLTEPQVYGRDKEKDEIVKILINTASDAQKLSVLPILGMGGLGKTTLSQMVFNDQRVTERFYPKIWICISDDFNEKRLIKAIVESIEGKSLSDMDLAPLQKKLQELLNGKRYFLVLDDVWNEDQHKWANLRAVLKVGASGAFVLTTTRLEKVGSIMGTLQPYELSNLSPEDCWFLFMQRAFGHQEEINPNLMAIGKEIVKKCGGVPLAAKTLGGILRFKREEREWEHVRDSPIWNLPQDESSILPALRLSYHHLPLDLRQCFVYCAVFPKDTKMAKENLIAFWMAHGFLLSKGNLELEDVGNEVWNELYLRSFFQEIEVESGKTYFKMHDLIHDLATSLFSANTSSSNIREINANYDGYMMSIGFAEVVSSYSPSLLQKFVSLRVLNLRNSNLNQLPSSIGDLVHLRYLDLSGNFRIRNLPKRLCKLQNLQTLDLHYCDSLSCLPKQTSKLGSLRNLLLDGCSLTSTPPRIGLLTCLKSLSCFVIGKRKGHQLGELKNLNLYGSISITKLDRVKKDTDAKEANLSAKANLHSLCLSWDLDGKHRYDSEVLEALKPHSNLKYLEINGFGGIRLPDWMNQSVLKNVVSIRIRGCENCSCLPPFGELPCLESLELHTGSADVEYVEDNVHPGRFPSLRKLVIWDFSNLKGLLKMEGEKQFPVLEEMTFYWCPMFVIPTLSSVKTLKVIVTDATVLRSISNLRALTSLDISDNVEATSLPEEMFKSLANLKYLKISFFRNLKELPTSLASLNALKSLKFEFCDALESLPEEGVKGLTSLTELSVSNCMMLKCLPEGLQHLTALTTLTITQCPIVFKRCERGIGEDWHKIAHIPYLTLYE.

The NB-ARC domain occupies 143–437 (GSVLTEPQVY…MAHGFLLSKG (295 aa)). ATP is bound at residue 182–189 (GMGGLGKT). LRR repeat units lie at residues 524–547 (FVSL…IGDL), 549–570 (HLRY…RLCK), 571–594 (LQNL…QTSK), 595–619 (LGSL…GLLT), 637–661 (LGEL…KKDT), 748–773 (LPCL…VHPG), 823–841 (VKTL…SISN), 842–866 (LRAL…MFKS), 868–890 (ANLK…SLAS), 891–915 (LNAL…GVKG), 917–939 (TSLT…GLQH), and 940–965 (LTAL…IGED).

It belongs to the disease resistance NB-LRR family.

In terms of biological role, disease resistance protein. Resistance proteins guard the plant against pathogens that contain an appropriate avirulence protein via a direct or indirect interaction with this avirulence protein. That triggers a defense system which restricts the pathogen growth. The polypeptide is Putative disease resistance protein RGA1 (RGA1) (Solanum bulbocastanum (Wild potato)).